Consider the following 502-residue polypeptide: ATP synthase subunit alpha (502 aa).

A disordered region spans residues 115–137 (VDGLGPVETTETRPIESPAPGVM). 169-176 (GDRQTGKT) provides a ligand contact to ATP.

The protein belongs to the ATPase alpha/beta chains family. As to quaternary structure, F-type ATPases have 2 components, CF(1) - the catalytic core - and CF(0) - the membrane proton channel. CF(1) has five subunits: alpha(3), beta(3), gamma(1), delta(1), epsilon(1). CF(0) has three main subunits: a(1), b(2) and c(9-12). The alpha and beta chains form an alternating ring which encloses part of the gamma chain. CF(1) is attached to CF(0) by a central stalk formed by the gamma and epsilon chains, while a peripheral stalk is formed by the delta and b chains.

Its subcellular location is the cell membrane. It carries out the reaction ATP + H2O + 4 H(+)(in) = ADP + phosphate + 5 H(+)(out). In terms of biological role, produces ATP from ADP in the presence of a proton gradient across the membrane. The alpha chain is a regulatory subunit. The chain is ATP synthase subunit alpha from Geobacillus stearothermophilus (Bacillus stearothermophilus).